The sequence spans 444 residues: 3-phosphoshikimate 1-carboxyvinyltransferase (444 aa).

Residues Lys-24, Ser-25, and Arg-29 each contribute to the 3-phosphoshikimate site. Lys-24 lines the phosphoenolpyruvate pocket. Phosphoenolpyruvate is bound by residues Gly-97 and Arg-125. Residues Ser-170, Gln-172, Asp-318, and Lys-345 each coordinate 3-phosphoshikimate. Gln-172 provides a ligand contact to phosphoenolpyruvate. Residue Asp-318 is the Proton acceptor of the active site. The phosphoenolpyruvate site is built by Arg-349 and Arg-391.

The protein belongs to the EPSP synthase family. Monomer.

It localises to the cytoplasm. The enzyme catalyses 3-phosphoshikimate + phosphoenolpyruvate = 5-O-(1-carboxyvinyl)-3-phosphoshikimate + phosphate. The protein operates within metabolic intermediate biosynthesis; chorismate biosynthesis; chorismate from D-erythrose 4-phosphate and phosphoenolpyruvate: step 6/7. In terms of biological role, catalyzes the transfer of the enolpyruvyl moiety of phosphoenolpyruvate (PEP) to the 5-hydroxyl of shikimate-3-phosphate (S3P) to produce enolpyruvyl shikimate-3-phosphate and inorganic phosphate. This Halorhodospira halophila (strain DSM 244 / SL1) (Ectothiorhodospira halophila (strain DSM 244 / SL1)) protein is 3-phosphoshikimate 1-carboxyvinyltransferase.